The primary structure comprises 254 residues: Phosphoribosylaminoimidazole-succinocarboxamide synthase (254 aa).

The protein belongs to the SAICAR synthetase family.

It carries out the reaction 5-amino-1-(5-phospho-D-ribosyl)imidazole-4-carboxylate + L-aspartate + ATP = (2S)-2-[5-amino-1-(5-phospho-beta-D-ribosyl)imidazole-4-carboxamido]succinate + ADP + phosphate + 2 H(+). It functions in the pathway purine metabolism; IMP biosynthesis via de novo pathway; 5-amino-1-(5-phospho-D-ribosyl)imidazole-4-carboxamide from 5-amino-1-(5-phospho-D-ribosyl)imidazole-4-carboxylate: step 1/2. This Rhizobium meliloti (strain 1021) (Ensifer meliloti) protein is Phosphoribosylaminoimidazole-succinocarboxamide synthase.